The following is a 586-amino-acid chain: MKDQLQALIEQAIDALRQDGTLPGDTAVDVQVTRTKDKAHGDFATNVALQLAKPARKKPRDVAEAIVARLPASGLVARTEIAGPGFINLFLGEQAKLSVIATIREQGERYGRSQLGAGKKVQVEFVSANPTGPLHVGHGRGAAYGAAVADLLEAVGFDVHREYYVNDAGRQMDILGTSVWLRYLELTGVELPFPTNAYRGDYVYDIAATLHREHGDHYKREAAEILDGLPPDEPDGGDKEEYIDAMIARAKELLGDNHYRFVFELGLNVILDDIRDDLAEFGVTYDTWYSERSLTDKGAVNLAIERLREAGHLYEKDGALWFRSTDFGDEKDRVVQRDNGQTTYFASDIAYHMDKMERGYDRVIDVWGADHHGYVPRVKAALKALGEDETRLDVLLVQFAILYRGGERVQMSTRSGSFVTLRELREEVGKDAARFFYVMRRCEQHLDFDLDLAKSQSADNPVYYIQYAHARVCSVLRQMEAKGLKHDPSHGEAKLSLLTESHEQEILATLARFPEVIEAAALVEEPHQIANYLRELANDFHTYYNAHQFLVDEPAIRDARLSLILAVRQVIANGLGLLGVSAPQEM.

Positions 128–138 match the 'HIGH' region motif; that stretch reads ANPTGPLHVGH.

This sequence belongs to the class-I aminoacyl-tRNA synthetase family. Monomer.

It is found in the cytoplasm. It carries out the reaction tRNA(Arg) + L-arginine + ATP = L-arginyl-tRNA(Arg) + AMP + diphosphate. This is Arginine--tRNA ligase from Thioalkalivibrio sulfidiphilus (strain HL-EbGR7).